A 184-amino-acid chain; its full sequence is dCTP deaminase (184 aa).

DCTP is bound by residues 107–112 (KSTYAR), 131–133 (TLE), Q152, Y166, and Q176. The active-site Proton donor/acceptor is E133.

The protein belongs to the dCTP deaminase family. Homotrimer.

The catalysed reaction is dCTP + H2O + H(+) = dUTP + NH4(+). Its pathway is pyrimidine metabolism; dUMP biosynthesis; dUMP from dCTP (dUTP route): step 1/2. Functionally, catalyzes the deamination of dCTP to dUTP. The polypeptide is dCTP deaminase (Rhizorhabdus wittichii (strain DSM 6014 / CCUG 31198 / JCM 15750 / NBRC 105917 / EY 4224 / RW1) (Sphingomonas wittichii)).